Here is a 259-residue protein sequence, read N- to C-terminus: tRNA (guanine-N(1)-)-methyltransferase (259 aa).

S-adenosyl-L-methionine contacts are provided by residues G113 and 133–138 (IGDYVL).

Belongs to the RNA methyltransferase TrmD family. In terms of assembly, homodimer.

It is found in the cytoplasm. It carries out the reaction guanosine(37) in tRNA + S-adenosyl-L-methionine = N(1)-methylguanosine(37) in tRNA + S-adenosyl-L-homocysteine + H(+). In terms of biological role, specifically methylates guanosine-37 in various tRNAs. This Xanthomonas oryzae pv. oryzae (strain MAFF 311018) protein is tRNA (guanine-N(1)-)-methyltransferase.